Reading from the N-terminus, the 50-residue chain is Peptide encoded by miPEP319a (50 aa).

Regulatory peptide encoded by the primary transcript (pri-miR319a) of the microRNA miR319a that enhances the accumulation of its corresponding mature miRNA. Acts probably as a transcriptional activator of its corresponding pri-miRNA. The sequence is that of Peptide encoded by miPEP319a from Arabidopsis thaliana (Mouse-ear cress).